We begin with the raw amino-acid sequence, 211 residues long: Protein-L-isoaspartate O-methyltransferase (211 aa).

S62 is an active-site residue.

Belongs to the methyltransferase superfamily. L-isoaspartyl/D-aspartyl protein methyltransferase family.

The protein localises to the cytoplasm. It catalyses the reaction [protein]-L-isoaspartate + S-adenosyl-L-methionine = [protein]-L-isoaspartate alpha-methyl ester + S-adenosyl-L-homocysteine. Catalyzes the methyl esterification of L-isoaspartyl residues in peptides and proteins that result from spontaneous decomposition of normal L-aspartyl and L-asparaginyl residues. It plays a role in the repair and/or degradation of damaged proteins. In Shewanella sp. (strain MR-4), this protein is Protein-L-isoaspartate O-methyltransferase.